The sequence spans 492 residues: MTLWINGDWITGQGASRVKRNPVSGEVLWQGNDAGAAQVEQACRAARAAFPRWARLSLAERQVVVERFAGLLESNKAELTAIIARETGKPRWEAATEVTAMINKIAISIKAYHVRTGEQRSEMPDGAASLRHRPHGVLAVFGPYNFPGHLPNGHIVPALLAGNTIIFKPSELTPWSGEAVMRLWQQAGLPPGVLNLVQGGRETGQALSALEDLDGLLFTGSANTGYQLHRQLSGQPEKILALEMGGNNPLIIDEVADIDAAVHLTIQSAFVTAGQRCTCARRLLLKSGAQGDAFLARLVAVSQRLTPGNWDDEPQPFIGGLISEQAAQQVVTAWQQLEAMGGRTLLAPRLLQSETSLLTPGIIEMTGVAGVPDEEVFGPLLRVWRYDSFEEAILMANNTRFGLSCGLVSPEREKFDQLLLEARAGIVNWNKPLTGAASTAPFGGIGASGNHRPSAWYAADYCAWPMASLESDSLTLPATLNPGLDFSDEVVR.

220–225 is an NAD(+) binding site; it reads GSANTG. Residues Glu-243 and Cys-277 contribute to the active site.

This sequence belongs to the aldehyde dehydrogenase family. AstD subfamily.

It carries out the reaction N-succinyl-L-glutamate 5-semialdehyde + NAD(+) + H2O = N-succinyl-L-glutamate + NADH + 2 H(+). The protein operates within amino-acid degradation; L-arginine degradation via AST pathway; L-glutamate and succinate from L-arginine: step 4/5. Functionally, catalyzes the NAD-dependent reduction of succinylglutamate semialdehyde into succinylglutamate. In Escherichia coli O9:H4 (strain HS), this protein is N-succinylglutamate 5-semialdehyde dehydrogenase.